The chain runs to 110 residues: Eukaryotic translation initiation factor eIF1 (110 aa).

Thr-40 is modified (phosphothreonine).

Belongs to the SUI1 family.

Its function is as follows. Probably involved in translation. This is Eukaryotic translation initiation factor eIF1 from Drosophila melanogaster (Fruit fly).